A 400-amino-acid chain; its full sequence is Queuine tRNA-ribosyltransferase catalytic subunit 1 (400 aa).

The Proton acceptor role is filled by Asp-103. Queuine is bound by residues 103 to 107 (DSGGF), Asp-157, Gln-200, and Gly-227. Residues 258 to 264 (GVGYAVD) are RNA binding. Catalysis depends on Asp-277, which acts as the Nucleophile. Residues 282 to 286 (TRTAR) form an RNA binding; important for wobble base 34 recognition region. Zn(2+) contacts are provided by Cys-315, Cys-317, Cys-320, and His-345.

This sequence belongs to the queuine tRNA-ribosyltransferase family. Heterodimer of a catalytic subunit qtrt1 and an accessory subunit qtrt2. It depends on Zn(2+) as a cofactor.

It is found in the cytoplasm. Its subcellular location is the mitochondrion outer membrane. It catalyses the reaction guanosine(34) in tRNA + queuine = queuosine(34) in tRNA + guanine. Functionally, catalytic subunit of the queuine tRNA-ribosyltransferase (TGT) that catalyzes the base-exchange of a guanine (G) residue with queuine (Q) at position 34 (anticodon wobble position) in tRNAs with GU(N) anticodons (tRNA-Asp, -Asn, -His and -Tyr), resulting in the hypermodified nucleoside queuosine (7-(((4,5-cis-dihydroxy-2-cyclopenten-1-yl)amino)methyl)-7-deazaguanosine). Catalysis occurs through a double-displacement mechanism. The nucleophile active site attacks the C1' of nucleotide 34 to detach the guanine base from the RNA, forming a covalent enzyme-RNA intermediate. The proton acceptor active site deprotonates the incoming queuine, allowing a nucleophilic attack on the C1' of the ribose to form the product. The polypeptide is Queuine tRNA-ribosyltransferase catalytic subunit 1 (Danio rerio (Zebrafish)).